The following is a 510-amino-acid chain: NAD(P)H-quinone oxidoreductase subunit 2 B, chloroplastic (510 aa).

13 helical membrane passes run Leu24 to Leu44, Ile57 to Phe77, Ile99 to Ile119, Met124 to Cys144, Ile150 to Thr170, Tyr183 to Gly203, Ile229 to Phe249, Trp295 to Ile315, Met323 to Asp343, Tyr354 to Leu374, Ala395 to Phe415, Leu418 to Leu438, and Met484 to Ile504.

It belongs to the complex I subunit 2 family. As to quaternary structure, NDH is composed of at least 16 different subunits, 5 of which are encoded in the nucleus.

The protein resides in the plastid. It is found in the chloroplast thylakoid membrane. It carries out the reaction a plastoquinone + NADH + (n+1) H(+)(in) = a plastoquinol + NAD(+) + n H(+)(out). The enzyme catalyses a plastoquinone + NADPH + (n+1) H(+)(in) = a plastoquinol + NADP(+) + n H(+)(out). In terms of biological role, NDH shuttles electrons from NAD(P)H:plastoquinone, via FMN and iron-sulfur (Fe-S) centers, to quinones in the photosynthetic chain and possibly in a chloroplast respiratory chain. The immediate electron acceptor for the enzyme in this species is believed to be plastoquinone. Couples the redox reaction to proton translocation, and thus conserves the redox energy in a proton gradient. This chain is NAD(P)H-quinone oxidoreductase subunit 2 B, chloroplastic, found in Drimys granadensis.